A 143-amino-acid polypeptide reads, in one-letter code: Transcriptional regulator MraZ (143 aa).

2 consecutive SpoVT-AbrB domains span residues 5-47 and 76-119; these read TYTP…PKEE and ADEQ…DAQA.

This sequence belongs to the MraZ family. In terms of assembly, forms oligomers.

Its subcellular location is the cytoplasm. It localises to the nucleoid. This is Transcriptional regulator MraZ from Corynebacterium efficiens (strain DSM 44549 / YS-314 / AJ 12310 / JCM 11189 / NBRC 100395).